A 3094-amino-acid chain; its full sequence is Replicase polyprotein 1ab (3094 aa).

Catalysis depends on for leader protease activity residues Cys509 and His569. Residues 622–647 (ARSVEKDLIDFKDEIKSLSKEKRSVT) are a coiled coil. An Alphavirus-like MT domain is found at 670-857 (SFTHSVYSDH…HKLSNIKSIM (188 aa)). A compositionally biased stretch (low complexity) spans 1807-1816 (DSESVSSDEV). The interval 1807–1828 (DSESVSSDEVASNPRPGLHGGS) is disordered. Residues 2215–2387 (TQTNFVSANA…FVDDESRVYG (173 aa)) enclose the (+)RNA virus helicase ATP-binding domain. Residues 2388–2548 (EVSYRCPWDV…AYRVYPTSFG (161 aa)) enclose the (+)RNA virus helicase C-terminal domain. The RdRp catalytic domain occupies 2817–2930 (YNVGEIDFSK…FSESPIRNSA (114 aa)).

The leader protease is released by autoproteolysis.

The protein resides in the host cytoplasmic vesicle membrane. It carries out the reaction RNA(n) + a ribonucleoside 5'-triphosphate = RNA(n+1) + diphosphate. The enzyme catalyses ATP + H2O = ADP + phosphate + H(+). Its function is as follows. L-pro is involved in systemic transport and in RNA amplification. Functionally, RNA-dependent RNA polymerase replicates the viral genome. In Beet yellows virus (isolate Ukraine) (BYV), this protein is Replicase polyprotein 1ab.